Consider the following 444-residue polypeptide: Probable galactarate/D-glucarate transporter GarP (444 aa).

Residues 1 to 11 (MILDTVDEKKK) lie on the Cytoplasmic side of the membrane. A helical membrane pass occupies residues 12 to 32 (GVHTRYLILLIIFIVTAVNYA). Residues 33-56 (DRATLSIAGTEVAKELQLSAVSMG) lie on the Periplasmic side of the membrane. Residues 57–77 (YIFSAFGWAYLLMQIPGGWLL) traverse the membrane as a helical segment. Topologically, residues 78-89 (DKFGSKKVYTYS) are cytoplasmic. 2 helical membrane passes run 90-110 (LFFW…PLAW) and 111-131 (AGIS…PSFP). The Cytoplasmic segment spans residues 132–157 (ANARIVAAWFPTKERGTASAIFNSAQ). Helical transmembrane passes span 158 to 178 (YFSL…WGWE) and 179 to 199 (HVFT…IKLI). Residues 200 to 252 (HNPTDHPRMSAEELKFISENGAVVDMDHKKPGSAAASGPKLHYIKQLLSNRMM) lie on the Cytoplasmic side of the membrane. A helical transmembrane segment spans residues 253–273 (LGVFFGQYFINTITWFFLTWF). The Periplasmic segment spans residues 274–288 (PIYLVQEKGMSILKV). Residues 289-309 (GLVASIPALCGFAGGVLGGVF) traverse the membrane as a helical segment. Residues 310–319 (SDYLIKRGLS) are Cytoplasmic-facing. Residues 320-340 (LTLARKLPIVLGMLLASTIIL) traverse the membrane as a helical segment. Residues 341-350 (CNYTNNTTLV) lie on the Periplasmic side of the membrane. Residues 351–371 (VMLMALAFFGKGFGALGWPVI) traverse the membrane as a helical segment. The Cytoplasmic portion of the chain corresponds to 372-385 (SDTAPKEIVGLCGG). The helical transmembrane segment at 386–406 (VFNVFGNVASIVTPLVIGYLV) threads the bilayer. Residues 407–413 (SELHSFN) lie on the Periplasmic side of the membrane. The chain crosses the membrane as a helical span at residues 414–434 (AALVFVGCSALMAMVCYLFVV). Topologically, residues 435 to 444 (GDIKRMELQK) are cytoplasmic.

Belongs to the major facilitator superfamily. Phthalate permease family.

Its subcellular location is the cell inner membrane. The catalysed reaction is galactarate(in) + H(+)(in) = galactarate(out) + H(+)(out). It carries out the reaction D-glucarate(in) + H(+)(in) = D-glucarate(out) + H(+)(out). The enzyme catalyses (R)-glycerate(in) + H(+)(in) = (R)-glycerate(out) + H(+)(out). Probably involved in the uptake of galactarate and/or D-glucarate. May also transport D-glycerate. In Escherichia coli (strain K12), this protein is Probable galactarate/D-glucarate transporter GarP.